The sequence spans 205 residues: Protein GrpE (205 aa).

The disordered stretch occupies residues Lys172–Ala205. Residues Pro177–Ala195 are compositionally biased toward low complexity.

Belongs to the GrpE family. As to quaternary structure, homodimer.

It localises to the cytoplasm. Participates actively in the response to hyperosmotic and heat shock by preventing the aggregation of stress-denatured proteins, in association with DnaK and GrpE. It is the nucleotide exchange factor for DnaK and may function as a thermosensor. Unfolded proteins bind initially to DnaJ; upon interaction with the DnaJ-bound protein, DnaK hydrolyzes its bound ATP, resulting in the formation of a stable complex. GrpE releases ADP from DnaK; ATP binding to DnaK triggers the release of the substrate protein, thus completing the reaction cycle. Several rounds of ATP-dependent interactions between DnaJ, DnaK and GrpE are required for fully efficient folding. This chain is Protein GrpE, found in Caulobacter sp. (strain K31).